We begin with the raw amino-acid sequence, 404 residues long: MKAAAKRISDGVYWTGVLDWDLRNYHGYTLQGTTYNAYLVCGDEGVALIDNSYPGTFDELMARVEDALQQVGMERVDYIIQNHVEKDHSGVLVELHRRFPEAPIYCTEVAVKGLLKHYPSLREAEFMTVKTGDVLDLGGKTLTFLETPLLHWPDSMFTLLDEDGILFSNDAFGQHLCCPQRLDREIPEYILMDAARKFYANLITPLSKLVLKKFDEVKELGLLERIQMIAPSHGQIWTDPMKIIEAYTGWATGMVDERVTVIYDTMHGSTRKMAHAIAEGAMSEGVDVRVYCLHEDDRSEIVKDILESGAIALGAPTIYDEPYPSVGDLLMYLRGLKFNRTLTRKALVFGSMGGNGGATGTMKELLAEAGFDVACEEEVYYVPTGDELDACFEAGRKLAAEIRR.

The Fe cation site is built by H83, E85, D87, H88, H151, D170, and H233. The 141-residue stretch at 259–399 (VTVIYDTMHG…ACFEAGRKLA (141 aa)) folds into the Flavodoxin-like domain. Residues 265-270 (TMHGST), 317-320 (TIYD), and 351-356 (SMGGNG) each bind FMN.

It in the N-terminal section; belongs to the zinc metallo-hydrolase group 3 family. In terms of assembly, homodimer. Homotetramer. The tetramer is composed of two functional dimers. It depends on FMN as a cofactor. Requires Fe cation as cofactor.

The enzyme catalyses 2 reduced coenzyme F420-(gamma-L-Glu)(n) + O2 = 2 oxidized coenzyme F420-(gamma-L-Glu)(n) + 2 H2O + 2 H(+). Its function is as follows. Catalyzes the oxidation of F420H(2) with O(2). May be involved in O(2) detoxification, reducing the intracellular O(2) concentration to a level allowing growth at the expense of methane formation. This Methanothermobacter marburgensis (strain ATCC BAA-927 / DSM 2133 / JCM 14651 / NBRC 100331 / OCM 82 / Marburg) (Methanobacterium thermoautotrophicum) protein is Coenzyme F420H(2) oxidase.